The sequence spans 110 residues: Large ribosomal subunit protein uL22 (110 aa).

It belongs to the universal ribosomal protein uL22 family. In terms of assembly, part of the 50S ribosomal subunit.

This protein binds specifically to 23S rRNA; its binding is stimulated by other ribosomal proteins, e.g. L4, L17, and L20. It is important during the early stages of 50S assembly. It makes multiple contacts with different domains of the 23S rRNA in the assembled 50S subunit and ribosome. Its function is as follows. The globular domain of the protein is located near the polypeptide exit tunnel on the outside of the subunit, while an extended beta-hairpin is found that lines the wall of the exit tunnel in the center of the 70S ribosome. This chain is Large ribosomal subunit protein uL22, found in Alkaliphilus oremlandii (strain OhILAs) (Clostridium oremlandii (strain OhILAs)).